Here is a 502-residue protein sequence, read N- to C-terminus: RxLR effector protein BLN06 (502 aa).

An N-terminal signal peptide occupies residues 1 to 20; the sequence is MTLLHCWLLLVGHLASTAYA. N-linked (GlcNAc...) asparagine glycosylation is present at asparagine 38. The dEER signature appears at 50 to 53; the sequence is LEER.

Belongs to the RxLR effector family.

It is found in the secreted. It localises to the host cell membrane. Secreted effector that triggers a robust hypersensitive response (HR) in Lactuca serriola LS102. The response to BLN06 was visible as chlorosis but not as strong necrosis. This is RxLR effector protein BLN06 from Bremia lactucae (Lettuce downy mildew).